We begin with the raw amino-acid sequence, 214 residues long: MRLRKKWWARPELEASPIFKSLDEARELKGNWKDEFKNNNDIYLELGCGRGGFAVQAASKFNDKNLISIDLKDEVLVYALKNIVDAELENVRLVAMNIGMIAEIFDENEISRIYINFCNPWPKDRHNKRRLTHTRFLTEYKKFIKPGTEIHFKTDDLDLFNDSLVYFEESGFELLYKTYDLHNSDYADENLMTEYETKFKEKGIKSKFLIAKLK.

E45, D70, N97, and N119 together coordinate S-adenosyl-L-methionine. Substrate is bound at residue K123. The tract at residues 125-130 (RHNKRR) is interaction with RNA. Substrate is bound by residues D155 and 193–196 (TEYE).

Belongs to the class I-like SAM-binding methyltransferase superfamily. TrmB family.

It carries out the reaction guanosine(46) in tRNA + S-adenosyl-L-methionine = N(7)-methylguanosine(46) in tRNA + S-adenosyl-L-homocysteine. It participates in tRNA modification; N(7)-methylguanine-tRNA biosynthesis. Catalyzes the formation of N(7)-methylguanine at position 46 (m7G46) in tRNA. The sequence is that of tRNA (guanine-N(7)-)-methyltransferase from Clostridium novyi (strain NT).